We begin with the raw amino-acid sequence, 277 residues long: MEMO1 family protein MTH_45 (277 aa).

The protein belongs to the MEMO1 family.

The polypeptide is MEMO1 family protein MTH_45 (Methanothermobacter thermautotrophicus (strain ATCC 29096 / DSM 1053 / JCM 10044 / NBRC 100330 / Delta H) (Methanobacterium thermoautotrophicum)).